The chain runs to 1419 residues: Formin-1 (1419 aa).

Positions methionine 1 to proline 622 are microtubule-binding. Disordered stretches follow at residues aspartate 138–aspartate 194, leucine 262–alanine 331, valine 343–aspartate 641, and serine 685–glutamate 711. The span at arginine 151–serine 163 shows a compositional bias: basic residues. Residues serine 298 to alanine 317 show a composition bias toward basic and acidic residues. A compositionally biased stretch (polar residues) spans arginine 394–alanine 411. Over residues isoleucine 425–arginine 438 the composition is skewed to basic and acidic residues. The tract at residues asparagine 456–serine 842 is mediates interaction with alpha-catenin. Residues phenylalanine 504 to threonine 517 show a composition bias toward polar residues. The segment covering valine 520–proline 529 has biased composition (pro residues). The span at alanine 614 to glycine 623 shows a compositional bias: polar residues. Positions serine 685–proline 694 are enriched in basic and acidic residues. The stretch at alanine 720–glutamate 774 forms a coiled coil. Disordered regions lie at residues glycine 859–proline 978 and serine 1390–asparagine 1419. Pro residues-rich tracts occupy residues leucine 868–proline 882 and proline 890–glycine 958. Positions proline 870–proline 957 constitute an FH1 domain. Positions arginine 972 to leucine 1388 constitute an FH2 domain.

The protein belongs to the formin homology family. Cappuccino subfamily. In terms of assembly, interacts with alpha-catenin and may interact with tubulin. Post-translationally, phosphorylated on serine and possibly threonine residues.

It localises to the nucleus. Its subcellular location is the cytoplasm. It is found in the cell junction. The protein resides in the adherens junction. The protein localises to the cell membrane. Functionally, plays a role in the formation of adherens junction and the polymerization of linear actin cables. This Homo sapiens (Human) protein is Formin-1 (FMN1).